The chain runs to 604 residues: Kelch-like protein 20 (604 aa).

Residues 63–130 (CDVVLVVGAK…SYTSQITVEE (68 aa)) form the BTB domain. Positions 165–267 (CLGIRAFADT…SPKFLVGTVG (103 aa)) constitute a BACK domain. Kelch repeat units follow at residues 314–360 (VLFA…VLDD), 362–408 (LYAV…VLGG), 409–455 (YLYA…VLGG), 457–502 (LYAV…VYQD), 504–549 (IYAV…VVNG), and 551–596 (LMAV…VIKM).

In terms of assembly, component of the BCR(KLHL20) E3 ubiquitin ligase complex, at least composed of cul3, klhl20 and rbx1.

The protein localises to the cytoplasm. The protein resides in the perinuclear region. It is found in the nucleus. It participates in protein modification; protein ubiquitination. Its function is as follows. Substrate-specific adapter of a BCR (BTB-CUL3-RBX1) E3 ubiquitin-protein ligase complex involved in interferon response and anterograde Golgi to endosome transport. The BCR(KLHL20) E3 ubiquitin ligase complex mediates the ubiquitination of target proteins, leading to their degradation by the proteasome. It also specifically mediates 'Lys-33'-linked ubiquitination. The polypeptide is Kelch-like protein 20 (klhl20) (Xenopus laevis (African clawed frog)).